The primary structure comprises 374 residues: Beta-lytic metalloendopeptidase (374 aa).

The first 24 residues, 1 to 24 (MKKISKAGLGLALVCALATIGGNA), serve as a signal peptide directing secretion. Residues 25–195 (ARRATAQRRG…RQGRPGRAAV (171 aa)) constitute a propeptide that is removed on maturation. A disordered region spans residues 128-187 (PTRQGAGDAGPRQSAAGAVRAFRRQRAGGRAARRRRVPAGLRPPVQRTAPGQGGFGPLRQ). The segment covering 148–164 (AFRRQRAGGRAARRRRV) has biased composition (basic residues). A disulfide bond links Cys-261 and Cys-307. Positions 316 and 318 each coordinate Zn(2+). Cysteines 351 and 364 form a disulfide.

The protein belongs to the peptidase M23A family. It depends on Zn(2+) as a cofactor.

Its subcellular location is the secreted. The enzyme catalyses Cleavage of N-acetylmuramoyl-|-Ala, and of the insulin B chain at 23-Gly-|-Phe-24 &gt; 18-Val-|-Cys(SO3H).. The protein is Beta-lytic metalloendopeptidase of Achromobacter lyticus.